The sequence spans 167 residues: Large ribosomal subunit protein uL10 (167 aa).

This sequence belongs to the universal ribosomal protein uL10 family. In terms of assembly, part of the ribosomal stalk of the 50S ribosomal subunit. The N-terminus interacts with L11 and the large rRNA to form the base of the stalk. The C-terminus forms an elongated spine to which L12 dimers bind in a sequential fashion forming a multimeric L10(L12)X complex.

Forms part of the ribosomal stalk, playing a central role in the interaction of the ribosome with GTP-bound translation factors. The sequence is that of Large ribosomal subunit protein uL10 from Cytophaga hutchinsonii (strain ATCC 33406 / DSM 1761 / CIP 103989 / NBRC 15051 / NCIMB 9469 / D465).